A 63-amino-acid chain; its full sequence is Conotoxin PnMRCL-0111 (63 aa).

A signal peptide spans 1-19 (MRCLPVFIVLLLLIVSAPG). The propeptide occupies 20–49 (FDARPKTEDDVPLSSFHDDLQRTVRTLLDI). The residue at position 62 (W62) is a Tryptophan amide.

The protein belongs to the conotoxin T superfamily. Contains 2 disulfide bonds that can be either 'C1-C3, C2-C4' or 'C1-C4, C2-C3', since these disulfide connectivities have been observed for conotoxins with cysteine framework V (for examples, see AC P0DQQ7 and AC P81755). As to expression, expressed by the venom duct.

It localises to the secreted. This is Conotoxin PnMRCL-0111 from Conus pennaceus (Feathered cone).